Consider the following 149-residue polypeptide: 3-dehydroquinate dehydratase (149 aa).

The active-site Proton acceptor is Tyr26. 3 residues coordinate substrate: Asn77, His83, and Asp90. The Proton donor role is filled by His103. Residues 104–105 and Arg114 each bind substrate; that span reads LS.

The protein belongs to the type-II 3-dehydroquinase family. As to quaternary structure, homododecamer.

The catalysed reaction is 3-dehydroquinate = 3-dehydroshikimate + H2O. It functions in the pathway metabolic intermediate biosynthesis; chorismate biosynthesis; chorismate from D-erythrose 4-phosphate and phosphoenolpyruvate: step 3/7. Its function is as follows. Catalyzes a trans-dehydration via an enolate intermediate. The sequence is that of 3-dehydroquinate dehydratase from Aliivibrio salmonicida (strain LFI1238) (Vibrio salmonicida (strain LFI1238)).